A 433-amino-acid polypeptide reads, in one-letter code: Glutamate-1-semialdehyde 2,1-aminomutase (433 aa).

Residue Lys267 is modified to N6-(pyridoxal phosphate)lysine.

It belongs to the class-III pyridoxal-phosphate-dependent aminotransferase family. HemL subfamily. In terms of assembly, homodimer. Pyridoxal 5'-phosphate serves as cofactor.

Its subcellular location is the cytoplasm. The enzyme catalyses (S)-4-amino-5-oxopentanoate = 5-aminolevulinate. It functions in the pathway porphyrin-containing compound metabolism; protoporphyrin-IX biosynthesis; 5-aminolevulinate from L-glutamyl-tRNA(Glu): step 2/2. The chain is Glutamate-1-semialdehyde 2,1-aminomutase from Syntrophobacter fumaroxidans (strain DSM 10017 / MPOB).